Consider the following 621-residue polypeptide: Stimulated by retinoic acid gene 6 protein-like (621 aa).

At 1-21 (MLAASTRTRQINITCDNPVDR) the chain is on the extracellular side. A glycan (N-linked (GlcNAc...) asparagine) is linked at N12. The helical transmembrane segment at 22–42 (EVFLHYSLIPSLCIILVLSFL) threads the bilayer. At 43–53 (QRREHRRQRDD) the chain is on the cytoplasmic side. A helical membrane pass occupies residues 54 to 74 (TSYLLGNHFGIIVPLDFVGTF). Topologically, residues 75 to 110 (SNRWSYGAAFGATANKVMFLFSEGYQPLTVPQWAQA) are extracellular. Residues 111-131 (FVLFIGGMEVGLSYFPFFACL) form a helical membrane-spanning segment. Topologically, residues 132-137 (SSEFQL) are cytoplasmic. The chain crosses the membrane as a helical span at residues 138 to 158 (VSSILGFSYSLTWFVVTVLQI). Topologically, residues 159–173 (SQCPHGQFLGRFETL) are extracellular. Residues 174-194 (VFYWPSLLCLGFLLGRFLHMF) form a helical membrane-spanning segment. At 195–258 (LKALPVHLGL…CFQFPSRMVG (64 aa)) the chain is on the cytoplasmic side. The chain crosses the membrane as a helical span at residues 259-279 (TLLLAFICLYLFIVIEFCVFL). Residues 280 to 321 (HVRDKLDMFEDKLESYLTHMNETGTLTPIILQVKELISVTKG) lie on the Extracellular side of the membrane. Residues 322 to 342 (VWVVTILPAALTCVTYLFHIL) form a helical membrane-spanning segment. At 343-383 (ACYRKHMKRLWAGDKHFLPQKFHSPSSAASVVAIARYSGWQ) the chain is on the cytoplasmic side. A helical membrane pass occupies residues 384–404 (IAYILWGYLIIHVVQSLCGVM). Topologically, residues 405–424 (LMYGLVLPIIHHRGLEMLQG) are extracellular. The helical transmembrane segment at 425 to 445 (FGLGVLTLSIVVGLIILQVWI) threads the bilayer. Over 446-476 (AGTFFLQPKLGTSDKQKPLALNNRRAFHNFN) the chain is Cytoplasmic. A helical membrane pass occupies residues 477 to 497 (YFLFFYNVLLGLGACLSRLLI). Residues 498–621 (SCLLGTWLIA…TQILLTCSDC (124 aa)) are Extracellular-facing. A Phosphothreonine modification is found at T612.

In terms of processing, glycosylated. Highly expressed in liver and small intestine. Also expressed in spleen, kidney, colon, stomach, placenta, adipose tissue and isolated adipocytes.

The protein localises to the cell membrane. In terms of biological role, acts as a high-affinity cell-surface receptor for retinol-binding protein RBP4 and mediates RBP4-dependent retinol uptake in the liver. This chain is Stimulated by retinoic acid gene 6 protein-like, found in Mus musculus (Mouse).